We begin with the raw amino-acid sequence, 491 residues long: Glycogen synthase (491 aa).

Lysine 15 contributes to the ADP-alpha-D-glucose binding site.

This sequence belongs to the glycosyltransferase 1 family. Bacterial/plant glycogen synthase subfamily.

The catalysed reaction is [(1-&gt;4)-alpha-D-glucosyl](n) + ADP-alpha-D-glucose = [(1-&gt;4)-alpha-D-glucosyl](n+1) + ADP + H(+). The protein operates within glycan biosynthesis; glycogen biosynthesis. Its function is as follows. Synthesizes alpha-1,4-glucan chains using ADP-glucose. The polypeptide is Glycogen synthase (Hydrogenovibrio crunogenus (strain DSM 25203 / XCL-2) (Thiomicrospira crunogena)).